The primary structure comprises 104 residues: Protein U9 (104 aa).

The chain is Protein U9 (U9) from Homo sapiens (Human).